The following is a 482-amino-acid chain: MVATTEQTVGKITQVIGPVVDAEFPSGKLPRIYNALTVKGTNPAGAEVNITCEVQQLLGDNQVRAVAMSSTDGLVRGMEIIDTGAPISVPVGKSTLGRIFNVLGEPVDEKGSVNVNETFPIHRPAPKLTDLETKPKVFETGIKVIDLLTPYRQGGKIGLFGGAGVGKTVIMMELINNIAIQHGGVSVFGGVGERTREGNDLYNEMIESKVINPDNPEDSKIALVYGQMNEPPGARMRVGLSALTMAEYFRDVNKQDVLLFIDNIFRFVQAGSEVSALLGRMPSAVGYQPTLGTDVGDLQERITSTKEGSITSIQAVYVPADDLTDPAPATTFAHLDGTTVLSRGLASKGIYPAVDPLDSTSTMLQPNIVGQEHYKTARAVQSTLQRYKELQDIIAILGLDELSEEDRQTVDRARKIERFLSQPFFVAEVFTGSPGKYVTLEDTIKGFNMILNGELDDLPEQAFYMVGNIDEAIAKAEKLKKG.

161 to 168 (GGAGVGKT) provides a ligand contact to ATP.

It belongs to the ATPase alpha/beta chains family. F-type ATPases have 2 components, CF(1) - the catalytic core - and CF(0) - the membrane proton channel. CF(1) has five subunits: alpha(3), beta(3), gamma(1), delta(1), epsilon(1). CF(0) has four main subunits: a(1), b(1), b'(1) and c(9-12).

The protein localises to the cellular thylakoid membrane. The catalysed reaction is ATP + H2O + 4 H(+)(in) = ADP + phosphate + 5 H(+)(out). Its function is as follows. Produces ATP from ADP in the presence of a proton gradient across the membrane. The catalytic sites are hosted primarily by the beta subunits. In Gloeothece citriformis (strain PCC 7424) (Cyanothece sp. (strain PCC 7424)), this protein is ATP synthase subunit beta.